Reading from the N-terminus, the 148-residue chain is Nickel and cobalt resistance protein CnrR (148 aa).

A signal peptide spans 1–26 (MMKSRTRRLSLSTLFGALLGVSVAAA). Topologically, residues 28–148 (LYYSHRNEAG…LIDALRRGSQ (121 aa)) are periplasmic. Residues 54–117 (NEREILELKE…AAGDLQRATL (64 aa)) are a coiled coil.

It to A.xylosoxydans NccX.

It localises to the periplasm. CnrH alone is able to activate cnr expression, while both CnrY and CrnR (CnrX) are needed for nickel induction of CnrH. Has been suggested to bind nickel. In Cupriavidus metallidurans (strain ATCC 43123 / DSM 2839 / NBRC 102507 / CH34) (Ralstonia metallidurans), this protein is Nickel and cobalt resistance protein CnrR (cnrR).